Reading from the N-terminus, the 224-residue chain is Small ribosomal subunit protein uS3 (224 aa).

The KH type-2 domain maps to I38 to K106.

It belongs to the universal ribosomal protein uS3 family. In terms of assembly, part of the 30S ribosomal subunit. Forms a tight complex with proteins S10 and S14.

In terms of biological role, binds the lower part of the 30S subunit head. Binds mRNA in the 70S ribosome, positioning it for translation. The polypeptide is Small ribosomal subunit protein uS3 (Lactobacillus helveticus (strain DPC 4571)).